Consider the following 186-residue polypeptide: Tumor necrosis factor alpha-induced protein 8-like protein 2 (186 aa).

Belongs to the TNFAIP8 family. TNFAIP8L2 subfamily.

Its function is as follows. Acts as a negative regulator of innate and adaptive immunity by maintaining immune homeostasis. Negative regulator of Toll-like receptor and T-cell receptor function. Prevents hyperresponsiveness of the immune system and maintains immune homeostasis. Inhibits jun/ap1 and NF-kappa-B activation. Promotes Fas-induced apoptosis. This chain is Tumor necrosis factor alpha-induced protein 8-like protein 2 (tnfaip8l2), found in Xenopus laevis (African clawed frog).